Here is an 835-residue protein sequence, read N- to C-terminus: Protein translocase subunit SecA (835 aa).

ATP is bound by residues Gln-85, 103 to 107, and Asp-492; that span reads GEGKT. The interval 788 to 807 is disordered; the sequence is VQGEAVHPSSDGEEAKKKPV. Zn(2+) is bound by residues Cys-819, Cys-821, Cys-830, and Cys-831.

The protein belongs to the SecA family. As to quaternary structure, monomer and homodimer. Part of the essential Sec protein translocation apparatus which comprises SecA, SecYEG and auxiliary proteins SecDF. Other proteins may also be involved. The cofactor is Zn(2+).

Its subcellular location is the cell membrane. The protein resides in the cytoplasm. The catalysed reaction is ATP + H2O + cellular proteinSide 1 = ADP + phosphate + cellular proteinSide 2.. In terms of biological role, part of the Sec protein translocase complex. Interacts with the SecYEG preprotein conducting channel. Has a central role in coupling the hydrolysis of ATP to the transfer of proteins into and across the cell membrane, serving as an ATP-driven molecular motor driving the stepwise translocation of polypeptide chains across the membrane. The polypeptide is Protein translocase subunit SecA (Bacillus cereus (strain ATCC 10987 / NRS 248)).